The sequence spans 662 residues: Tubulin--tyrosine ligase-like protein 12 (662 aa).

One can recognise a TTL domain in the interval 324–660 (LKKRKIKVYA…LDEIDPTKVT (337 aa)). Residues 472-475 (CEYI), Lys491, and Asp493 contribute to the ATP site.

It belongs to the tubulin--tyrosine ligase family.

Its function is as follows. Regulates microtubule dynamics in uterine muscle cells. This Caenorhabditis elegans protein is Tubulin--tyrosine ligase-like protein 12.